Consider the following 360-residue polypeptide: Aminomethyltransferase (360 aa).

Belongs to the GcvT family. As to quaternary structure, the glycine cleavage system is composed of four proteins: P, T, L and H.

It catalyses the reaction N(6)-[(R)-S(8)-aminomethyldihydrolipoyl]-L-lysyl-[protein] + (6S)-5,6,7,8-tetrahydrofolate = N(6)-[(R)-dihydrolipoyl]-L-lysyl-[protein] + (6R)-5,10-methylene-5,6,7,8-tetrahydrofolate + NH4(+). Its function is as follows. The glycine cleavage system catalyzes the degradation of glycine. This is Aminomethyltransferase from Flavobacterium psychrophilum (strain ATCC 49511 / DSM 21280 / CIP 103535 / JIP02/86).